The chain runs to 118 residues: Beta-2-microglobulin (118 aa).

An N-terminal signal peptide occupies residues 1–21 (MGSRWGIAVLGLFCFVSCLEA). Residues 26–113 (PKIQVYSRHP…VHEGVKKTVK (88 aa)) form the Ig-like C1-type domain. Cysteine 46 and cysteine 101 are oxidised to a cystine.

The protein belongs to the beta-2-microglobulin family. In terms of assembly, heterodimer of an alpha chain and a beta chain. Beta-2-microglobulin is the beta-chain of major histocompatibility complex class I molecules.

It is found in the secreted. Its function is as follows. Component of the class I major histocompatibility complex (MHC). Involved in the presentation of peptide antigens to the immune system. The polypeptide is Beta-2-microglobulin (B2M) (Ornithorhynchus anatinus (Duckbill platypus)).